Reading from the N-terminus, the 221-residue chain is Pre-rRNA-processing protein SRD1 (221 aa).

A compositionally biased stretch (polar residues) spans 101-110 (SKNRVTSACN). 2 disordered regions span residues 101 to 121 (SKNR…QEAN) and 137 to 161 (ASIT…TILP). The segment covering 142–155 (KYSKKTTSRPKREK) has biased composition (basic residues). The segment at 168 to 193 (CSKCKDTWTIQWRSGPDQNRELCSPC) adopts a GATA-type zinc-finger fold. The disordered stretch occupies residues 201–221 (LKKENEKKRQAADKRIDRNNP). A compositionally biased stretch (basic and acidic residues) spans 203-221 (KENEKKRQAADKRIDRNNP).

It is found in the cytoplasm. Its subcellular location is the nucleus. Its function is as follows. Plays a direct or indirect role in pre-rRNA processing. This is Pre-rRNA-processing protein SRD1 (SRD1) from Saccharomyces cerevisiae (strain ATCC 204508 / S288c) (Baker's yeast).